The primary structure comprises 1055 residues: Elongation factor 3 (1055 aa).

Residue Val-45 participates in ADP binding. 7 HEAT repeats span residues 45–86 (VEFF…NGAA), 96–133 (SAEN…SMNP), 135–172 (ASFV…SAPY), 175–213 (GEAM…LVEN), 217–255 (EKFV…APTI), 257–290 (LIAP…LVDS), and 295–337 (RPFL…VPVE). ABC transporter domains lie at 447–659 (CNIE…SYYQ) and 687–1004 (LKMR…KKAG). 4 residues coordinate ADP: Asn-723, Glu-933, Asn-936, and His-962. Disordered stretches follow at residues 987–1006 (HNWV…AGDD) and 1024–1055 (EKKL…DEEL). Basic residues predominate over residues 1033-1044 (RKAKKDRMARRK).

This sequence belongs to the ABC transporter superfamily. ABCF family. EF3 subfamily. As to quaternary structure, associates with ribosomes.

It localises to the cytoplasm. The protein resides in the cytosol. The enzyme catalyses ATP + H2O = ADP + phosphate + H(+). The protein operates within protein biosynthesis; polypeptide chain elongation. Its function is as follows. Ribosome-dependent ATPase that functions in cytoplasmic translation elongation. Required for the ATP-dependent release of deacylated tRNA from the ribosomal E-site during protein biosynthesis. Stimulates the eEF1A-dependent binding of aminoacyl-tRNA to the ribosomal A-site, which has reduced affinity for tRNA as long as the E-site is occupied. Assists translation termination by stimulating the release of nascent protein from the ribosome by release factors. Appears to target calcium-channel protein CCH1 to the plasma membrane. The sequence is that of Elongation factor 3 from Cryptococcus neoformans var. neoformans serotype D (strain JEC21 / ATCC MYA-565) (Filobasidiella neoformans).